Consider the following 199-residue polypeptide: Holliday junction resolvase RecU (199 aa).

Residues Thr82, Asp84, Glu97, and Gln116 each coordinate Mg(2+).

The protein belongs to the RecU family. Requires Mg(2+) as cofactor.

It is found in the cytoplasm. The enzyme catalyses Endonucleolytic cleavage at a junction such as a reciprocal single-stranded crossover between two homologous DNA duplexes (Holliday junction).. Functionally, endonuclease that resolves Holliday junction intermediates in genetic recombination. Cleaves mobile four-strand junctions by introducing symmetrical nicks in paired strands. Promotes annealing of linear ssDNA with homologous dsDNA. Required for DNA repair, homologous recombination and chromosome segregation. The sequence is that of Holliday junction resolvase RecU from Streptococcus pyogenes serotype M1.